The primary structure comprises 284 residues: 4-diphosphocytidyl-2-C-methyl-D-erythritol kinase (284 aa).

Residue lysine 9 is part of the active site. 90-100 (PLVSGLGGDSS) serves as a coordination point for ATP. Aspartate 132 is an active-site residue.

Belongs to the GHMP kinase family. IspE subfamily.

It catalyses the reaction 4-CDP-2-C-methyl-D-erythritol + ATP = 4-CDP-2-C-methyl-D-erythritol 2-phosphate + ADP + H(+). Its pathway is isoprenoid biosynthesis; isopentenyl diphosphate biosynthesis via DXP pathway; isopentenyl diphosphate from 1-deoxy-D-xylulose 5-phosphate: step 3/6. Functionally, catalyzes the phosphorylation of the position 2 hydroxy group of 4-diphosphocytidyl-2C-methyl-D-erythritol. This Dehalococcoides mccartyi (strain ATCC BAA-2100 / JCM 16839 / KCTC 5957 / BAV1) protein is 4-diphosphocytidyl-2-C-methyl-D-erythritol kinase.